A 290-amino-acid polypeptide reads, in one-letter code: 4-hydroxybenzoate octaprenyltransferase (290 aa).

6 helical membrane-spanning segments follow: residues 41-61, 89-109, 133-153, 158-178, 202-224, and 269-289; these read WPLV…GCAM, WEAV…ILPL, FFAI…PMAF, GTVP…SVAY, FGRF…YAWI, and WLGG…GAAG.

This sequence belongs to the UbiA prenyltransferase family. The cofactor is Mg(2+).

Its subcellular location is the cell inner membrane. It catalyses the reaction all-trans-octaprenyl diphosphate + 4-hydroxybenzoate = 4-hydroxy-3-(all-trans-octaprenyl)benzoate + diphosphate. It functions in the pathway cofactor biosynthesis; ubiquinone biosynthesis. In terms of biological role, catalyzes the prenylation of para-hydroxybenzoate (PHB) with an all-trans polyprenyl group. Mediates the second step in the final reaction sequence of ubiquinone-8 (UQ-8) biosynthesis, which is the condensation of the polyisoprenoid side chain with PHB, generating the first membrane-bound Q intermediate 3-octaprenyl-4-hydroxybenzoate. The chain is 4-hydroxybenzoate octaprenyltransferase from Burkholderia vietnamiensis (strain G4 / LMG 22486) (Burkholderia cepacia (strain R1808)).